A 64-amino-acid chain; its full sequence is Large ribosomal subunit protein bL35 (64 aa).

Belongs to the bacterial ribosomal protein bL35 family.

The sequence is that of Large ribosomal subunit protein bL35 from Shewanella loihica (strain ATCC BAA-1088 / PV-4).